The primary structure comprises 307 residues: tRNA pseudouridine synthase B (307 aa).

Catalysis depends on Asp38, which acts as the Nucleophile.

It belongs to the pseudouridine synthase TruB family. Type 1 subfamily.

It carries out the reaction uridine(55) in tRNA = pseudouridine(55) in tRNA. In terms of biological role, responsible for synthesis of pseudouridine from uracil-55 in the psi GC loop of transfer RNAs. The polypeptide is tRNA pseudouridine synthase B (Bacillus thuringiensis (strain Al Hakam)).